We begin with the raw amino-acid sequence, 2631 residues long: Cyclic GMP-binding protein C (2631 aa).

LRR repeat units lie at residues 170 to 194 (TAQI…IFSL), 196 to 217 (WIQK…IGKL), 218 to 240 (QQLQ…IGDL), 242 to 262 (NLKR…LERL), 263 to 285 (SKLE…IASL), and 287 to 308 (SLKT…VVSK). A Roc domain is found at 323 to 515 (GARPCLRSKL…QLIEDIIKTQ (193 aa)). Residues 336 to 343 (GDPGVGKT), 402 to 406 (DIANQ), and 458 to 461 (THID) contribute to the GTP site. A COR domain is found at 523–741 (PSSFFTLEEA…ESCQKRAVIL (219 aa)). Residues 878–1172 (VKINKEVGRG…KKKFAPLPFT (295 aa)) enclose the Protein kinase domain. ATP-binding positions include 884–892 (VGRGAFGIV) and K905. The active-site Proton acceptor is D1023. A compositionally biased stretch (polar residues) spans 1225-1250 (ISLTSSGTSPTNSPVGGLLSQSLTQP). Disordered stretches follow at residues 1225-1263 (ISLT…ILST) and 1387-1418 (SSAT…RNSV). Over residues 1251-1263 (ITSGGSTSGILST) the composition is skewed to low complexity. An N-terminal Ras-GEF domain is found at 1366 to 1539 (SVSIIIAATM…QIYGTLTTHE (174 aa)). Residues 1392–1404 (KSEHISTRRRSDT) show a composition bias toward basic and acidic residues. Residues 1620-1706 (PLLGITVKEK…SPTSFYMFLE (87 aa)) form the DEP domain. The region spanning 1708-1971 (DPELIARQYT…DLKALDSLQI (264 aa)) is the Ras-GEF domain. Residues 1989–2013 (GTTNDDKEKGDENGGGLTSSNFFGN) are disordered. An a nucleoside 3',5'-cyclic phosphate-binding site is contributed by 2014–2133 (GSDELTERDW…AKFYKIMANQ (120 aa)). 3 disordered regions span residues 2142–2180 (PWSK…GGGL), 2192–2239 (MSLS…TTTD), and 2263–2346 (SANL…GQQP). The span at 2144–2174 (SKPKNTTGGSSSSNQSAGPDNILGTTPTGIS) shows a compositional bias: low complexity. Residues 2212–2221 (LPSPPAPLQS) show a composition bias toward pro residues. A compositionally biased stretch (low complexity) spans 2222–2238 (PPTSGISSPTTTTSTTT). Over residues 2287 to 2299 (TINKDPHQRDSGS) the composition is skewed to basic and acidic residues. Residues 2321 to 2336 (GSISYLGRTQTSTSPL) show a composition bias toward polar residues. The GRAM domain occupies 2354 to 2414 (EFCQRFALVD…KNIDKLICIN (61 aa)). Residue 2490–2616 (GDELTKEDWE…ASKWFKYLAT (127 aa)) coordinates a nucleoside 3',5'-cyclic phosphate.

This sequence belongs to the protein kinase superfamily. TKL Ser/Thr protein kinase family. ROCO subfamily.

It carries out the reaction L-seryl-[protein] + ATP = O-phospho-L-seryl-[protein] + ADP + H(+). It catalyses the reaction L-threonyl-[protein] + ATP = O-phospho-L-threonyl-[protein] + ADP + H(+). Its function is as follows. Promotes the exchange of Ras-bound GDP by GTP. Required for cyclic GMP-mediated chemotaxis, polarity. Plays a key role in cyclic AMP-induced myosin II translocation to the cortex. Also involved in the phosphorylation of mlkA and mlcR, either directly or via an intermediate kinase. In Dictyostelium discoideum (Social amoeba), this protein is Cyclic GMP-binding protein C (gbpC).